Consider the following 311-residue polypeptide: Formimidoylglutamase (311 aa).

Residues H130, D155, H157, D159, C242, and D244 each contribute to the Mn(2+) site.

This sequence belongs to the arginase family. Mn(2+) is required as a cofactor.

It catalyses the reaction N-formimidoyl-L-glutamate + H2O = formamide + L-glutamate. The protein operates within amino-acid degradation; L-histidine degradation into L-glutamate; L-glutamate from N-formimidoyl-L-glutamate (hydrolase route): step 1/1. Functionally, catalyzes the conversion of N-formimidoyl-L-glutamate to L-glutamate and formamide. This chain is Formimidoylglutamase, found in Staphylococcus aureus (strain bovine RF122 / ET3-1).